A 693-amino-acid chain; its full sequence is MWVSIFNLKSSGLNHFCTRTKAFRYFWCRTFSLASLSENNSRFQTDSSRLPYSGSRYYHSSSKHFGEDFVSILKNIDVPRDCVETIRNVLVKHNWIQKYESGFSTELDQYTVIRILDDLFEETLDASIVLYFFRWSELWIGVEHSSRSISRMIHILVSGNMNYRAVDMLLCLVKKCSGEERSLCLVMKDLFETRIDRRVLETVFSILIDCCIRERKVNMALKLTYKVDQFGIFPSRGVCISLLKEILRVHGLELAREFVEHMLSRGRHLNAAVLSLFIRKYCSDGYFDKGWELLMGMKHYGIRPDIVAFTVFIDKLCKAGFLKEATSVLFKLKLFGISQDSVSVSSVIDGFCKVGKPEEAIKLIHSFRLRPNIFVYSSFLSNICSTGDMLRASTIFQEIFELGLLPDCVCYTTMIDGYCNLGRTDKAFQYFGALLKSGNPPSLTTSTILIGACSRFGSISDAESVFRNMKTEGLKLDVVTYNNLMHGYGKTHQLNKVFELIDEMRSAGISPDVATYNILIHSMVVRGYIDEANEIISELIRRGFVPSTLAFTDVIGGFSKRGDFQEAFILWFYMADLRMKPDVVTCSALLHGYCKAQRMEKAIVLFNKLLDAGLKPDVVLYNTLIHGYCSVGDIEKACELIGLMVQRGMLPNESTHHALVLGLEGKRFVNSETHASMLLEEIIVAKWHLTSGG.

PPR repeat units follow at residues Leu200 to Pro234, Ser235 to Leu269, Asn270 to Pro304, Asp305 to Gln339, Asp340 to Arg370, Asn372 to Pro406, Asp407 to Pro441, Ser442 to Leu476, Asp477 to Pro511, Asp512 to Pro546, Ser547 to Pro581, Asp582 to Pro616, and Asp617 to Pro651.

This sequence belongs to the PPR family. P subfamily.

The chain is Pentatricopeptide repeat-containing protein At2g19280 from Arabidopsis thaliana (Mouse-ear cress).